The following is a 301-amino-acid chain: Probable alpha-L-glutamate ligase 1 (301 aa).

Positions 104–287 constitute an ATP-grasp domain; that stretch reads LQLLSRKNIG…VAEKIIQFIE (184 aa). Residues Lys141, 178 to 179, Asp187, and 211 to 213 contribute to the ATP site; these read EY and RSN. Residues Asp248, Glu260, and Asn262 each contribute to the Mg(2+) site. 3 residues coordinate Mn(2+): Asp248, Glu260, and Asn262.

Belongs to the RimK family. Mg(2+) serves as cofactor. Mn(2+) is required as a cofactor.

This is Probable alpha-L-glutamate ligase 1 from Shewanella frigidimarina (strain NCIMB 400).